The sequence spans 404 residues: Cysteine desulfurase IscS (404 aa).

Pyridoxal 5'-phosphate contacts are provided by residues 75–76 (AT), asparagine 155, glutamine 183, and 203–205 (SGH). Lysine 206 bears the N6-(pyridoxal phosphate)lysine mark. Threonine 243 contributes to the pyridoxal 5'-phosphate binding site. The active-site Cysteine persulfide intermediate is the cysteine 328. Cysteine 328 contributes to the [2Fe-2S] cluster binding site.

The protein belongs to the class-V pyridoxal-phosphate-dependent aminotransferase family. NifS/IscS subfamily. In terms of assembly, homodimer. Forms a heterotetramer with IscU, interacts with other sulfur acceptors. It depends on pyridoxal 5'-phosphate as a cofactor.

The protein localises to the cytoplasm. The catalysed reaction is (sulfur carrier)-H + L-cysteine = (sulfur carrier)-SH + L-alanine. Its pathway is cofactor biosynthesis; iron-sulfur cluster biosynthesis. In terms of biological role, master enzyme that delivers sulfur to a number of partners involved in Fe-S cluster assembly, tRNA modification or cofactor biosynthesis. Catalyzes the removal of elemental sulfur and selenium atoms from cysteine and selenocysteine to produce alanine. Functions as a sulfur delivery protein for Fe-S cluster synthesis onto IscU, an Fe-S scaffold assembly protein, as well as other S acceptor proteins. Also functions as a selenium delivery protein in the pathway for the biosynthesis of selenophosphate. This Salmonella gallinarum (strain 287/91 / NCTC 13346) protein is Cysteine desulfurase IscS.